The sequence spans 252 residues: 3-dehydroquinate dehydratase (252 aa).

Residues 47–49 and arginine 83 each bind 3-dehydroquinate; that span reads EWR. Histidine 144 (proton donor/acceptor) is an active-site residue. Residue lysine 171 is the Schiff-base intermediate with substrate of the active site. Positions 213, 232, and 236 each coordinate 3-dehydroquinate.

This sequence belongs to the type-I 3-dehydroquinase family. Homodimer.

The enzyme catalyses 3-dehydroquinate = 3-dehydroshikimate + H2O. The protein operates within metabolic intermediate biosynthesis; chorismate biosynthesis; chorismate from D-erythrose 4-phosphate and phosphoenolpyruvate: step 3/7. Functionally, involved in the third step of the chorismate pathway, which leads to the biosynthesis of aromatic amino acids. Catalyzes the cis-dehydration of 3-dehydroquinate (DHQ) and introduces the first double bond of the aromatic ring to yield 3-dehydroshikimate. This chain is 3-dehydroquinate dehydratase, found in Lactiplantibacillus plantarum (strain ATCC BAA-793 / NCIMB 8826 / WCFS1) (Lactobacillus plantarum).